The following is a 484-amino-acid chain: Calcium-dependent protein kinase 26 (484 aa).

The 259-residue stretch at 24–282 (YSLGHKLGQG…AHQVLRHPWI (259 aa)) folds into the Protein kinase domain. ATP contacts are provided by residues 30–38 (LGQGQFGTT) and Lys-53. Asp-148 acts as the Proton acceptor in catalysis. Ser-188 is subject to Phosphoserine. The interval 288 to 318 (APDRALDPAVLSRLKQFSAMNKLKQMALRVI) is autoinhibitory domain. 4 consecutive EF-hand domains span residues 325–360 (EEIA…YGST), 361–396 (LKDT…LNKL), 397–432 (EREE…QGMS), and 436–466 (LEDV…GIVG). Residues Asp-338, Asp-340, Ser-342, Glu-349, Asp-374, Asp-376, Ser-378, Thr-380, Glu-385, Asp-410, Asp-412, Ser-414, Tyr-416, Glu-421, Asp-444, Asp-446, Asp-448, Arg-450, and Glu-455 each contribute to the Ca(2+) site.

Belongs to the protein kinase superfamily. Ser/Thr protein kinase family. CDPK subfamily.

It catalyses the reaction L-seryl-[protein] + ATP = O-phospho-L-seryl-[protein] + ADP + H(+). The enzyme catalyses L-threonyl-[protein] + ATP = O-phospho-L-threonyl-[protein] + ADP + H(+). Its activity is regulated as follows. Activated by calcium. Autophosphorylation may play an important role in the regulation of the kinase activity. Its function is as follows. May play a role in signal transduction pathways that involve calcium as a second messenger. This Arabidopsis thaliana (Mouse-ear cress) protein is Calcium-dependent protein kinase 26 (CPK26).